The following is a 239-amino-acid chain: 2,3,4,5-tetrahydropyridine-2,6-dicarboxylate N-acetyltransferase (239 aa).

It belongs to the transferase hexapeptide repeat family. DapH subfamily.

The catalysed reaction is (S)-2,3,4,5-tetrahydrodipicolinate + acetyl-CoA + H2O = L-2-acetamido-6-oxoheptanedioate + CoA. It functions in the pathway amino-acid biosynthesis; L-lysine biosynthesis via DAP pathway; LL-2,6-diaminopimelate from (S)-tetrahydrodipicolinate (acetylase route): step 1/3. Its function is as follows. Catalyzes the transfer of an acetyl group from acetyl-CoA to tetrahydrodipicolinate. In Staphylococcus haemolyticus (strain JCSC1435), this protein is 2,3,4,5-tetrahydropyridine-2,6-dicarboxylate N-acetyltransferase.